The primary structure comprises 354 residues: Peptide chain release factor 1 (354 aa).

Q232 bears the N5-methylglutamine mark.

It belongs to the prokaryotic/mitochondrial release factor family. Post-translationally, methylated by PrmC. Methylation increases the termination efficiency of RF1.

Its subcellular location is the cytoplasm. Functionally, peptide chain release factor 1 directs the termination of translation in response to the peptide chain termination codons UAG and UAA. This is Peptide chain release factor 1 from Jannaschia sp. (strain CCS1).